The sequence spans 1084 residues: Cellulose synthase A catalytic subunit 6 [UDP-forming] (1084 aa).

Met-1 is subject to N-acetylmethionine. Residues 1-277 are Cytoplasmic-facing; sequence MNTGGRLIAG…KSSKINPYRM (277 aa). The Zn(2+) site is built by Cys-39, Cys-42, Cys-58, Cys-61, Cys-66, Cys-69, Cys-81, and Cys-84. The RING-type; degenerate zinc finger occupies 39 to 85; that stretch reads CQICRDEIELTVDGEPFVACNECAFPVCRPCYEYERREGNQACPQCK. Residues 278–298 traverse the membrane as a helical segment; sequence LIVLRLVILGLFFHYRILHPV. Over 299 to 300 the chain is Extracellular; that stretch reads KD. The helical transmembrane segment at 301–321 threads the bilayer; the sequence is AYALWLISVICEIWFAVSWVL. The Cytoplasmic portion of the chain corresponds to 322–868; it reads DQFPKWYPIE…INSVVYPWTS (547 aa). UDP-alpha-D-glucose contacts are provided by Ser-360, Lys-366, Glu-367, and Asp-396. The active site involves Asp-396. The stretch at 450–476 forms a coiled coil; the sequence is VRERRAMKRDYEEFKVKINALVATAQK. Lys-537 provides a ligand contact to UDP-alpha-D-glucose. Mn(2+) contacts are provided by Lys-538 and Asp-562. The stretch at 675 to 703 forms a coiled coil; it reads RKAKTVAADKKKKNREASKQIHALENIEE. Asp-785 is an active-site residue. The chain crosses the membrane as a helical span at residues 869–889; it reads LPLIVYCSLPAICLLTGKFIV. Topologically, residues 890–894 are extracellular; sequence PEISN. Residues 895–915 form a helical membrane-spanning segment; that stretch reads YASILFMALFSSIAITGILEM. At 916-930 the chain is on the cytoplasmic side; it reads QWGKVGIDDWWRNEQ. Residues 931-951 traverse the membrane as a helical segment; sequence FWVIGGVSAHLFALFQGLLKV. Topologically, residues 952 to 980 are extracellular; sequence LAGVDTNFTVTSKAADDGEFSDLYLFKWT. N-linked (GlcNAc...) asparagine glycosylation occurs at Asn-958. The helical transmembrane segment at 981–1001 threads the bilayer; sequence SLLIPPMTLLIINVIGVIVGV. Over 1002-1012 the chain is Cytoplasmic; that stretch reads SDAISNGYDSW. A helical membrane pass occupies residues 1013–1033; that stretch reads GPLFGRLFFALWVIIHLYPFL. At 1034–1042 the chain is on the extracellular side; sequence KGLLGKQDR. A helical transmembrane segment spans residues 1043-1063; the sequence is MPTIIVVWSILLASILTLLWV. Residues 1064-1084 are Cytoplasmic-facing; the sequence is RVNPFVAKGGPILEICGLDCL.

It belongs to the glycosyltransferase 2 family. Plant cellulose synthase subfamily. Interacts with CESA1 and CESA3. Interacts with STL1 and STL2, but not with GOT1. Binds to CSI1 and CSI3. Interacts with PAT24/TIP1. Zn(2+) is required as a cofactor. The cofactor is Mn(2+). In terms of processing, S-acylated. As to expression, expressed in germinating seeds, seedlings, roots, stems, leaves and flowers. Not present in mature flowers.

The protein resides in the cell membrane. The catalysed reaction is [(1-&gt;4)-beta-D-glucosyl](n) + UDP-alpha-D-glucose = [(1-&gt;4)-beta-D-glucosyl](n+1) + UDP + H(+). It functions in the pathway glycan metabolism; plant cellulose biosynthesis. Its function is as follows. Catalytic subunit of cellulose synthase terminal complexes ('rosettes'), required for beta-1,4-glucan microfibril crystallization, a major mechanism of the cell wall formation. Involved in the primary cell wall formation. The presence of each protein CESA1 and CESA6 is critical for cell expansion. The hypocotyl elongation is based on a CESA6-dependent cell elongation in dark and a CESA6-independent cell elongation in light. The transition between these two mechanisms requires photosynthesis and PHYB, but not CRY1. The CESA6-dependent cell elongation seems to be independent of gibberellic acid, auxin and ethylene. May be involved in sensitivity to isoxaben. Associates with and moves along cortical microtubules for the process of cellulose deposition. This is Cellulose synthase A catalytic subunit 6 [UDP-forming] from Arabidopsis thaliana (Mouse-ear cress).